The following is a 93-amino-acid chain: Translation initiation factor IF-1 (93 aa).

The 72-residue stretch at 1 to 72 (MAKEELIQFE…EKGRLIFRHK (72 aa)) folds into the S1-like domain. Positions 69–93 (FRHKDERPSGAPRGGPPRGGQFRRR) are disordered.

The protein belongs to the IF-1 family. As to quaternary structure, component of the 30S ribosomal translation pre-initiation complex which assembles on the 30S ribosome in the order IF-2 and IF-3, IF-1 and N-formylmethionyl-tRNA(fMet); mRNA recruitment can occur at any time during PIC assembly.

The protein localises to the cytoplasm. Its function is as follows. One of the essential components for the initiation of protein synthesis. Stabilizes the binding of IF-2 and IF-3 on the 30S subunit to which N-formylmethionyl-tRNA(fMet) subsequently binds. Helps modulate mRNA selection, yielding the 30S pre-initiation complex (PIC). Upon addition of the 50S ribosomal subunit IF-1, IF-2 and IF-3 are released leaving the mature 70S translation initiation complex. The chain is Translation initiation factor IF-1 from Nitrobacter hamburgensis (strain DSM 10229 / NCIMB 13809 / X14).